The following is a 51-amino-acid chain: Large ribosomal subunit protein bL32c (51 aa).

The protein belongs to the bacterial ribosomal protein bL32 family.

Its subcellular location is the plastid. The protein localises to the chloroplast. This Oenothera elata subsp. hookeri (Hooker's evening primrose) protein is Large ribosomal subunit protein bL32c.